The chain runs to 336 residues: Probable deoxyhypusine synthase (336 aa).

The active-site Nucleophile is the lysine 308.

This sequence belongs to the deoxyhypusine synthase family. It depends on NAD(+) as a cofactor.

The enzyme catalyses [eIF5A protein]-L-lysine + spermidine = [eIF5A protein]-deoxyhypusine + propane-1,3-diamine. It participates in protein modification; eIF5A hypusination. Catalyzes the NAD-dependent oxidative cleavage of spermidine and the subsequent transfer of the butylamine moiety of spermidine to the epsilon-amino group of a specific lysine residue of the eIF-5A precursor protein to form the intermediate deoxyhypusine residue. In Pyrococcus furiosus (strain ATCC 43587 / DSM 3638 / JCM 8422 / Vc1), this protein is Probable deoxyhypusine synthase.